A 169-amino-acid chain; its full sequence is Putative hydrogenase maturation protease MJ0631 (169 aa).

It belongs to the peptidase A31 family.

This Methanocaldococcus jannaschii (strain ATCC 43067 / DSM 2661 / JAL-1 / JCM 10045 / NBRC 100440) (Methanococcus jannaschii) protein is Putative hydrogenase maturation protease MJ0631.